The following is a 222-amino-acid chain: Small ribosomal subunit protein eS1 (222 aa).

The protein belongs to the eukaryotic ribosomal protein eS1 family.

The protein is Small ribosomal subunit protein eS1 of Pyrobaculum islandicum (strain DSM 4184 / JCM 9189 / GEO3).